Here is a 224-residue protein sequence, read N- to C-terminus: Deoxyribose-phosphate aldolase (224 aa).

The active-site Proton donor/acceptor is the Asp-92. Lys-155 serves as the catalytic Schiff-base intermediate with acetaldehyde. Lys-184 (proton donor/acceptor) is an active-site residue.

The protein belongs to the DeoC/FbaB aldolase family. DeoC type 1 subfamily.

It is found in the cytoplasm. The catalysed reaction is 2-deoxy-D-ribose 5-phosphate = D-glyceraldehyde 3-phosphate + acetaldehyde. It participates in carbohydrate degradation; 2-deoxy-D-ribose 1-phosphate degradation; D-glyceraldehyde 3-phosphate and acetaldehyde from 2-deoxy-alpha-D-ribose 1-phosphate: step 2/2. In terms of biological role, catalyzes a reversible aldol reaction between acetaldehyde and D-glyceraldehyde 3-phosphate to generate 2-deoxy-D-ribose 5-phosphate. This is Deoxyribose-phosphate aldolase from Clostridium perfringens (strain SM101 / Type A).